Consider the following 101-residue polypeptide: Putative pterin-4-alpha-carbinolamine dehydratase (101 aa).

It belongs to the pterin-4-alpha-carbinolamine dehydratase family.

The enzyme catalyses (4aS,6R)-4a-hydroxy-L-erythro-5,6,7,8-tetrahydrobiopterin = (6R)-L-erythro-6,7-dihydrobiopterin + H2O. The protein is Putative pterin-4-alpha-carbinolamine dehydratase of Burkholderia mallei (strain ATCC 23344).